A 317-amino-acid polypeptide reads, in one-letter code: Small ribosomal subunit protein uS2 (317 aa).

The disordered stretch occupies residues 277-317 (SDWTAPAANPANAAAAGAPAPAPAAATTTESWGGSGAENWG). Residues 281 to 302 (APAANPANAAAAGAPAPAPAAA) are compositionally biased toward low complexity.

The protein belongs to the universal ribosomal protein uS2 family. As to quaternary structure, component of the small ribosomal subunit. Mature ribosomes consist of a small (40S) and a large (60S) subunit. The 40S subunit contains about 33 different proteins and 1 molecule of RNA (18S). The 60S subunit contains about 49 different proteins and 3 molecules of RNA (28S, 5.8S and 5S). Interacts with ribosomal protein S21.

Its subcellular location is the cytoplasm. Required for the assembly and/or stability of the 40S ribosomal subunit. Required for the processing of the 20S rRNA-precursor to mature 18S rRNA in a late step of the maturation of 40S ribosomal subunits. The sequence is that of Small ribosomal subunit protein uS2 from Urechis caupo (Innkeeper worm).